We begin with the raw amino-acid sequence, 218 residues long: ATP-dependent Clp protease proteolytic subunit 2 (218 aa).

The active-site Nucleophile is the Ser114. His139 is a catalytic residue.

It belongs to the peptidase S14 family. Fourteen ClpP subunits assemble into 2 heptameric rings which stack back to back to give a disk-like structure with a central cavity, resembling the structure of eukaryotic proteasomes.

The protein localises to the cytoplasm. It catalyses the reaction Hydrolysis of proteins to small peptides in the presence of ATP and magnesium. alpha-casein is the usual test substrate. In the absence of ATP, only oligopeptides shorter than five residues are hydrolyzed (such as succinyl-Leu-Tyr-|-NHMec, and Leu-Tyr-Leu-|-Tyr-Trp, in which cleavage of the -Tyr-|-Leu- and -Tyr-|-Trp bonds also occurs).. Its function is as follows. Cleaves peptides in various proteins in a process that requires ATP hydrolysis. Has a chymotrypsin-like activity. Plays a major role in the degradation of misfolded proteins. Probably partially responsible for degradation of ECF sigma factor SigR prime. The sequence is that of ATP-dependent Clp protease proteolytic subunit 2 from Streptomyces coelicolor (strain ATCC BAA-471 / A3(2) / M145).